Reading from the N-terminus, the 570-residue chain is Pentatricopeptide repeat-containing protein At1g31430 (570 aa).

13 PPR repeats span residues 10 to 44 (SLLM…GLYP), 45 to 79 (DNFT…GLEF), 80 to 110 (DSYV…MPQR), 111 to 141 (DVVS…MSQE), 147 to 177 (DEGT…VVTE), 181 to 215 (SVRI…NVKC), 216 to 242 (WTSM…SPVK), 243 to 277 (DVVL…GIRP), 278 to 312 (DNFV…RVTV), 313 to 343 (DKVV…IKER), 344 to 378 (DTAS…GVRL), 379 to 414 (DAIT…NVQP), and 415 to 449 (KSEH…SDET). The segment at 453-528 (VYCSLLSAAR…FPGCSSIEID (76 aa)) is type E motif. A type E(+) motif region spans residues 529–561 (GVGHEFIVGDDLLSHPKMDEINSMLHQTTNLML).

This sequence belongs to the PPR family. PCMP-E subfamily.

This chain is Pentatricopeptide repeat-containing protein At1g31430 (PCMP-E55), found in Arabidopsis thaliana (Mouse-ear cress).